A 342-amino-acid chain; its full sequence is Oxygen-dependent coproporphyrinogen-III oxidase (342 aa).

Residue Ser-107 participates in substrate binding. His-111 and His-121 together coordinate a divalent metal cation. His-121 serves as the catalytic Proton donor. 123 to 125 (NYR) contributes to the substrate binding site. Positions 155 and 185 each coordinate a divalent metal cation. The segment at 277 to 312 (YVEFNLVYDRGTIFGLQTNGRTESILMSLPPLVRWE) is important for dimerization.

It belongs to the aerobic coproporphyrinogen-III oxidase family. As to quaternary structure, homodimer. A divalent metal cation serves as cofactor.

The protein localises to the cytoplasm. The catalysed reaction is coproporphyrinogen III + O2 + 2 H(+) = protoporphyrinogen IX + 2 CO2 + 2 H2O. Its pathway is porphyrin-containing compound metabolism; protoporphyrin-IX biosynthesis; protoporphyrinogen-IX from coproporphyrinogen-III (O2 route): step 1/1. Its function is as follows. Involved in the heme and chlorophyll biosynthesis. Catalyzes the aerobic oxidative decarboxylation of propionate groups of rings A and B of coproporphyrinogen-III to yield the vinyl groups in protoporphyrinogen-IX. The protein is Oxygen-dependent coproporphyrinogen-III oxidase of Synechococcus sp. (strain ATCC 27144 / PCC 6301 / SAUG 1402/1) (Anacystis nidulans).